We begin with the raw amino-acid sequence, 279 residues long: Four and a half LIM domains protein 2 (279 aa).

The C4-type zinc finger occupies 7 to 31; the sequence is CHHCNESLFGKKYILREESPYCVVC. LIM zinc-binding domains follow at residues 40–92, 101–153, and 162–212; these read CEEC…CTDC, CQEC…CVPC, and CVQC…CLNC. Lys78 is covalently cross-linked (Glycyl lysine isopeptide (Lys-Gly) (interchain with G-Cter in SUMO2)). Residues Lys167 and Lys220 each participate in a glycyl lysine isopeptide (Lys-Gly) (interchain with G-Cter in SUMO2) cross-link. The LIM zinc-binding 4 domain maps to 221-275; that stretch reads CAGCTNPISGLGGTKYISFEERQWHNDCFNCKKCSLSLVGRGFLTERDDILCPDC. Ser238 is modified (phosphoserine).

As to quaternary structure, interacts with ZNF638 and TTN/titin. Interacts with E4F1. Interacts with GRB7. Interacts with SIRT1 and FOXO1. Interacts with CEFIP. Interacts with calcineurin. Interacts with FOXK1. Expressed in skeletal muscle and heart.

It is found in the cytoplasm. The protein resides in the nucleus. Its subcellular location is the myofibril. It localises to the sarcomere. The protein localises to the z line. Functionally, may function as a molecular transmitter linking various signaling pathways to transcriptional regulation. Negatively regulates the transcriptional repressor E4F1 and may function in cell growth. Inhibits the transcriptional activity of FOXO1 and its apoptotic function by enhancing the interaction of FOXO1 with SIRT1 and FOXO1 deacetylation. Negatively regulates the calcineurin/NFAT signaling pathway in cardiomyocytes. The sequence is that of Four and a half LIM domains protein 2 (FHL2) from Homo sapiens (Human).